A 165-amino-acid polypeptide reads, in one-letter code: Growth arrest and DNA damage-inducible protein GADD45 alpha (165 aa).

Residue threonine 2 is modified to Phosphothreonine.

Belongs to the GADD45 family. As to quaternary structure, interacts with AURKA, PCNA, GADD45GIP1 and MAPK14.

It localises to the nucleus. Might affect PCNA interaction with some CDK (cell division protein kinase) complexes; stimulates DNA excision repair in vitro and inhibits entry of cells into S phase. In T-cells, functions as a regulator of p38 MAPKs by inhibiting p88 phosphorylation and activity. The chain is Growth arrest and DNA damage-inducible protein GADD45 alpha (GADD45A) from Cricetulus griseus (Chinese hamster).